The sequence spans 99 residues: RNA-binding protein HI_1333 (99 aa).

Positions 2–98 (TTLSTKQKQF…SEEAKIQLPR (97 aa)) constitute a CRM domain.

The protein is RNA-binding protein HI_1333 of Haemophilus influenzae (strain ATCC 51907 / DSM 11121 / KW20 / Rd).